We begin with the raw amino-acid sequence, 37 residues long: Dolichyl-diphosphooligosaccharide--protein glycosyltransferase subunit 4A (37 aa).

Residues 1-7 are Lumenal-facing; the sequence is MIDDQDL. The chain crosses the membrane as a helical span at residues 8-28; that stretch reads GFIANFLGIFIFALVIAYHYV. Residues 29–37 lie on the Cytoplasmic side of the membrane; the sequence is TADPKYEAT.

Belongs to the OST4 family. Component of the oligosaccharyltransferase (OST) complex.

The protein resides in the endoplasmic reticulum membrane. Its function is as follows. Subunit of the oligosaccharyl transferase (OST) complex that catalyzes the initial transfer of a defined glycan (Glc(3)Man(9)GlcNAc(2) in eukaryotes) from the lipid carrier dolichol-pyrophosphate to an asparagine residue within an Asn-X-Ser/Thr consensus motif in nascent polypeptide chains, the first step in protein N-glycosylation. N-glycosylation occurs cotranslationally and the complex associates with the Sec61 complex at the channel-forming translocon complex that mediates protein translocation across the endoplasmic reticulum (ER). All subunits are required for a maximal enzyme activity. The sequence is that of Dolichyl-diphosphooligosaccharide--protein glycosyltransferase subunit 4A (OST4A) from Arabidopsis thaliana (Mouse-ear cress).